We begin with the raw amino-acid sequence, 160 residues long: Protein-export protein SecB (160 aa).

The protein belongs to the SecB family. As to quaternary structure, homotetramer, a dimer of dimers. One homotetramer interacts with 1 SecA dimer.

It is found in the cytoplasm. Its function is as follows. One of the proteins required for the normal export of preproteins out of the cell cytoplasm. It is a molecular chaperone that binds to a subset of precursor proteins, maintaining them in a translocation-competent state. It also specifically binds to its receptor SecA. The chain is Protein-export protein SecB from Rhizobium johnstonii (strain DSM 114642 / LMG 32736 / 3841) (Rhizobium leguminosarum bv. viciae).